The sequence spans 310 residues: Cytochrome f (310 aa).

An N-terminal signal peptide occupies residues 1–27; it reads MRRLLSPLFAALIVGVTVLTAPSTSWA. Positions 28, 48, 51, and 52 each coordinate heme. Residues 277–297 form a helical membrane-spanning segment; that stretch reads IYGLLAFFAAVALAQIMLVLK.

The protein belongs to the cytochrome f family. In terms of assembly, the 4 large subunits of the cytochrome b6-f complex are cytochrome b6, subunit IV (17 kDa polypeptide, PetD), cytochrome f and the Rieske protein, while the 4 small subunits are PetG, PetL, PetM and PetN. The complex functions as a dimer. Requires heme as cofactor.

Its subcellular location is the cellular thylakoid membrane. In terms of biological role, component of the cytochrome b6-f complex, which mediates electron transfer between photosystem II (PSII) and photosystem I (PSI), cyclic electron flow around PSI, and state transitions. This Synechococcus sp. (strain WH7803) protein is Cytochrome f.